Reading from the N-terminus, the 66-residue chain is Large ribosomal subunit protein bL35 (66 aa).

Belongs to the bacterial ribosomal protein bL35 family.

The chain is Large ribosomal subunit protein bL35 from Bradyrhizobium diazoefficiens (strain JCM 10833 / BCRC 13528 / IAM 13628 / NBRC 14792 / USDA 110).